The chain runs to 362 residues: Aminomethyltransferase (362 aa).

The protein belongs to the GcvT family. In terms of assembly, the glycine cleavage system is composed of four proteins: P, T, L and H.

It carries out the reaction N(6)-[(R)-S(8)-aminomethyldihydrolipoyl]-L-lysyl-[protein] + (6S)-5,6,7,8-tetrahydrofolate = N(6)-[(R)-dihydrolipoyl]-L-lysyl-[protein] + (6R)-5,10-methylene-5,6,7,8-tetrahydrofolate + NH4(+). The glycine cleavage system catalyzes the degradation of glycine. This is Aminomethyltransferase from Chloroherpeton thalassium (strain ATCC 35110 / GB-78).